Here is a 157-residue protein sequence, read N- to C-terminus: Transcription elongation factor GreA (157 aa).

Residues 1 to 75 (MSKEIILTQE…VETLINRAKV (75 aa)) adopt a coiled-coil conformation.

It belongs to the GreA/GreB family.

Functionally, necessary for efficient RNA polymerase transcription elongation past template-encoded arresting sites. The arresting sites in DNA have the property of trapping a certain fraction of elongating RNA polymerases that pass through, resulting in locked ternary complexes. Cleavage of the nascent transcript by cleavage factors such as GreA or GreB allows the resumption of elongation from the new 3'terminus. GreA releases sequences of 2 to 3 nucleotides. In Mycoplasma mycoides subsp. mycoides SC (strain CCUG 32753 / NCTC 10114 / PG1), this protein is Transcription elongation factor GreA.